A 930-amino-acid chain; its full sequence is Probable outer membrane protein pmp8 (930 aa).

The N-terminal stretch at 1–26 (MKIPLHKLLISSTLVTPILLSIATYG) is a signal peptide. Residues 636 to 930 (SIYQQRGLWA…NVDCGLRYSF (295 aa)) form the Autotransporter domain.

This sequence belongs to the PMP outer membrane protein family.

It localises to the secreted. The protein resides in the cell wall. Its subcellular location is the cell outer membrane. The sequence is that of Probable outer membrane protein pmp8 (pmp8) from Chlamydia pneumoniae (Chlamydophila pneumoniae).